The chain runs to 1212 residues: Nucleolar protein 6 (1212 aa).

2 disordered regions span residues 1–72 and 1156–1212; these read MGKI…PVSI and KREQ…KSLS. The segment covering 1197–1212 has biased composition (basic residues); that stretch reads LKRKSLIKSRPLKSLS.

It belongs to the NRAP family. In terms of assembly, part of the small subunit (SSU) processome, composed of more than 70 proteins and the RNA chaperone small nucleolar RNA (snoRNA) U3.

The protein localises to the nucleus. Its subcellular location is the nucleolus. It is found in the chromosome. Its function is as follows. Part of the small subunit (SSU) processome, first precursor of the small eukaryotic ribosomal subunit. During the assembly of the SSU processome in the nucleolus, many ribosome biogenesis factors, an RNA chaperone and ribosomal proteins associate with the nascent pre-rRNA and work in concert to generate RNA folding, modifications, rearrangements and cleavage as well as targeted degradation of pre-ribosomal RNA by the RNA exosome. The protein is Nucleolar protein 6 of Drosophila pseudoobscura pseudoobscura (Fruit fly).